Consider the following 485-residue polypeptide: Glutamyl-tRNA(Gln) amidotransferase subunit A (485 aa).

Catalysis depends on charge relay system residues lysine 79 and serine 154. The active-site Acyl-ester intermediate is the serine 178.

The protein belongs to the amidase family. GatA subfamily. As to quaternary structure, heterotrimer of A, B and C subunits.

The catalysed reaction is L-glutamyl-tRNA(Gln) + L-glutamine + ATP + H2O = L-glutaminyl-tRNA(Gln) + L-glutamate + ADP + phosphate + H(+). Functionally, allows the formation of correctly charged Gln-tRNA(Gln) through the transamidation of misacylated Glu-tRNA(Gln) in organisms which lack glutaminyl-tRNA synthetase. The reaction takes place in the presence of glutamine and ATP through an activated gamma-phospho-Glu-tRNA(Gln). This is Glutamyl-tRNA(Gln) amidotransferase subunit A from Staphylococcus epidermidis (strain ATCC 35984 / DSM 28319 / BCRC 17069 / CCUG 31568 / BM 3577 / RP62A).